Reading from the N-terminus, the 396-residue chain is Elongation factor Tu (396 aa).

A tr-type G domain is found at 10 to 206; sequence KPHVNVGTIG…ALDSYIPEPT (197 aa). Residues 19-26 form a G1 region; sequence GHVDHGKT. 19-26 is a binding site for GTP; the sequence is GHVDHGKT. Threonine 26 is a Mg(2+) binding site. Positions 60–64 are G2; sequence GITIS. Residues 81–84 form a G3 region; the sequence is DCPG. GTP-binding positions include 81–85 and 136–139; these read DCPGH and NKAD. The G4 stretch occupies residues 136–139; it reads NKAD. The G5 stretch occupies residues 174–176; it reads SAL.

It belongs to the TRAFAC class translation factor GTPase superfamily. Classic translation factor GTPase family. EF-Tu/EF-1A subfamily. As to quaternary structure, monomer.

The protein resides in the cytoplasm. The catalysed reaction is GTP + H2O = GDP + phosphate + H(+). Its function is as follows. GTP hydrolase that promotes the GTP-dependent binding of aminoacyl-tRNA to the A-site of ribosomes during protein biosynthesis. This chain is Elongation factor Tu, found in Hydrogenovibrio crunogenus (strain DSM 25203 / XCL-2) (Thiomicrospira crunogena).